The primary structure comprises 212 residues: Glutathione S-transferase (212 aa).

A GST N-terminal domain is found at 1–82 (MGMKLHGPAM…YIAHTYADKG (82 aa)). Glutathione contacts are provided by residues Ser11, 12–13 (PA), 40–41 (HK), 53–54 (QV), and 66–67 (ES). Residues 89 to 212 (DPKKMAIMSV…AWSKAIEYKQ (124 aa)) enclose the GST C-terminal domain.

This sequence belongs to the GST superfamily. Phi family.

The enzyme catalyses RX + glutathione = an S-substituted glutathione + a halide anion + H(+). Its function is as follows. Conjugation of reduced glutathione to a wide number of exogenous and endogenous hydrophobic electrophiles. The polypeptide is Glutathione S-transferase (Hyoscyamus muticus (Egyptian henbane)).